A 753-amino-acid chain; its full sequence is Transcription factor SOX-30 (753 aa).

Disordered stretches follow at residues 1–45 (MERA…TLSA) and 137–161 (AKKQ…TGPR). The span at 7–23 (EPPPQPRPLRPAPPPLP) shows a compositional bias: pro residues. The segment at residues 337 to 405 (VKRPMNAFMV…KHREEFPGWV (69 aa)) is a DNA-binding region (HMG box). Disordered stretches follow at residues 514–575 (TGPS…SPCP) and 726–753 (PTST…LRDL). Composition is skewed to polar residues over residues 531–563 (TVKQ…STIQ) and 726–739 (PTST…VNVT).

As to quaternary structure, interacts with CTNNB1, competitively inhibiting CTNNB1-TCF7L2/TCF4 interaction.

Its subcellular location is the nucleus. The protein localises to the cytoplasm. Its function is as follows. Acts both as a transcriptional activator and a repressor. Binds to the DNA sequence 5'-ACAAT-3' and shows a preference for guanine residues surrounding this core motif. Binds to its own promoter and activates its own transcription. Required to activate the expression of postmeiotic genes involved in spermiogenesis. Binds to the promoter region of CTNNB1 and represses its transcription which leads to inhibition of Wnt signaling. Also inhibits Wnt signaling by binding to the CTNNB1 protein, preventing interaction of CTNNB1 with TCF7L2/TCF4. This is Transcription factor SOX-30 (SOX30) from Homo sapiens (Human).